Consider the following 318-residue polypeptide: DNA-directed RNA polymerase subunit alpha 2 (318 aa).

The alpha N-terminal domain (alpha-NTD) stretch occupies residues Met-1–Glu-227. The segment at Ile-242–Leu-318 is alpha C-terminal domain (alpha-CTD).

The protein belongs to the RNA polymerase alpha chain family. Homodimer. The RNAP catalytic core consists of 2 alpha, 1 beta, 1 beta' and 1 omega subunit. When a sigma factor is associated with the core the holoenzyme is formed, which can initiate transcription.

It catalyses the reaction RNA(n) + a ribonucleoside 5'-triphosphate = RNA(n+1) + diphosphate. Functionally, DNA-dependent RNA polymerase catalyzes the transcription of DNA into RNA using the four ribonucleoside triphosphates as substrates. In Francisella tularensis subsp. tularensis (strain FSC 198), this protein is DNA-directed RNA polymerase subunit alpha 2.